The following is a 555-amino-acid chain: MFLGLDLSTQQLKGVVIDESLNVHQEVAVDFDRDLSDYNTIKGVYRNGYEVFAPVCMWLDAIDLLFERLKASVDVSKIQAISGAGQQHASVFLLKGSKKALNSLDAKSSLKQQLESLIHPTSPNWQDASTTKECEELESCIGGAKALADLTGSKAHLRFTGPQIKRFRRLHPETYENTERIALVSNFLASVLLQTEAPLDISDVCGMNLWDIQNEKFDIRLLEEVAGNSKGPDLANKLGTVEINGAKHLGPIGKYFVKKYGFSPNCQIIPLTGDNPATILSLPLRPGKDVLLSLGTSTTALMATQNYVCSPEYHMFAHPVTQNHYMVMLCYKNGSLAREQVRNTINEKYNVSDNTSWDRFNESILNPNIKGAGEKKQLGLFYPQREILPAVGPGTWRFAIQGTELYQVDKDEESWDYPDEDASAIVESQNLDIRMRITPLLTGIPQPDRVYVVGGASRNEAIVFKISQVLGCDVYRLKHGGSNACAVGGAIKAAYAMNGKGFTFEEYVNKSWDESKKIELIMNKPSAQTYEEYGKLLPFLKKAEDIAIQQSDIRH.

Residues His88, Arg158, Asp274, and Asn275 each coordinate substrate. ATP is bound by residues Trp357, 455–456 (GA), and Asn459.

Belongs to the FGGY kinase family.

It localises to the cytoplasm. The enzyme catalyses D-xylulose + ATP = D-xylulose 5-phosphate + ADP + H(+). The protein is Xylulose kinase of Schizosaccharomyces pombe (strain 972 / ATCC 24843) (Fission yeast).